A 274-amino-acid polypeptide reads, in one-letter code: Large ribosomal subunit protein uL2 (274 aa).

Disordered regions lie at residues 1–23 and 222–242; these read MAIKIYRPTSPGRRHHSVSSFEE and GSAMSPNNHPHGGGECRSPIG.

It belongs to the universal ribosomal protein uL2 family. Part of the 50S ribosomal subunit. Forms a bridge to the 30S subunit in the 70S ribosome.

Functionally, one of the primary rRNA binding proteins. Required for association of the 30S and 50S subunits to form the 70S ribosome, for tRNA binding and peptide bond formation. It has been suggested to have peptidyltransferase activity; this is somewhat controversial. Makes several contacts with the 16S rRNA in the 70S ribosome. The chain is Large ribosomal subunit protein uL2 from Dehalococcoides mccartyi (strain ATCC BAA-2266 / KCTC 15142 / 195) (Dehalococcoides ethenogenes (strain 195)).